Reading from the N-terminus, the 66-residue chain is Beta-mammal toxin Co1 (66 aa).

Residues 1 to 66 (KEGYLVNHST…VWPLPKKTCN (66 aa)) enclose the LCN-type CS-alpha/beta domain. Disulfide bonds link cysteine 12/cysteine 65, cysteine 16/cysteine 41, cysteine 25/cysteine 46, and cysteine 29/cysteine 48.

Expressed by the venom gland.

It localises to the secreted. Its function is as follows. Beta toxins bind voltage-independently at site-4 of sodium channels (Nav) and shift the voltage of activation toward more negative potentials thereby affecting sodium channel activation and promoting spontaneous and repetitive firing. This toxin acts on human Nav1.6/SCN8A voltage-gated sodium channels. In vivo, is lethal to mice 40 minutes after intraperitoneal injection at a dose of 5ug. No activity is observed when injected into crickets or woodlice. The protein is Beta-mammal toxin Co1 of Centruroides ornatus (Scorpion).